Consider the following 121-residue polypeptide: Peptidyl-tRNA hydrolase (121 aa).

Belongs to the PTH2 family.

It localises to the cytoplasm. The enzyme catalyses an N-acyl-L-alpha-aminoacyl-tRNA + H2O = an N-acyl-L-amino acid + a tRNA + H(+). Its function is as follows. The natural substrate for this enzyme may be peptidyl-tRNAs which drop off the ribosome during protein synthesis. The polypeptide is Peptidyl-tRNA hydrolase (Sulfurisphaera tokodaii (strain DSM 16993 / JCM 10545 / NBRC 100140 / 7) (Sulfolobus tokodaii)).